The primary structure comprises 588 residues: Adenine deaminase (588 aa).

It belongs to the metallo-dependent hydrolases superfamily. Adenine deaminase family. Homodimer. Mn(2+) is required as a cofactor.

The enzyme catalyses adenine + H2O + H(+) = hypoxanthine + NH4(+). The protein is Adenine deaminase of Escherichia coli (strain 55989 / EAEC).